We begin with the raw amino-acid sequence, 452 residues long: Caspase-2 (452 aa).

A2 bears the N-acetylalanine mark. The propeptide occupies 2–169; it reads AAPSAGSWST…TVEHSLDNKD (168 aa). A CARD domain is found at 32–121; that stretch reads MHPHHQETLK…GHLEDMLLTT (90 aa). Residue S157 is modified to Phosphoserine. Catalysis depends on residues H277 and C320. Positions 326–333 are excised as a propeptide; that stretch reads DRGVDQQD. A compositionally biased stretch (basic and acidic residues) spans 327 to 336; sequence RGVDQQDGKN. The interval 327–354 is disordered; that stretch reads RGVDQQDGKNHAGSPGCEESDAGKEKLP. Position 340 is a phosphoserine (S340).

Belongs to the peptidase C14A family. In terms of assembly, heterotetramer that consists of two anti-parallel arranged heterodimers, each one formed by a p18 subunit and a p12 subunit. Forms a complex named the PIDDosome with PIDD1 and CRADD. Interacts with NOL3 (via CARD domain); inhibits CASP2 activity in a phosphorylation-dependent manner. The mature protease can process its own propeptide, but not that of other caspases. In terms of tissue distribution, expressed at higher levels in the embryonic lung, liver and kidney than in the heart and brain. In adults, higher level expression is seen in the placenta, lung, kidney, and pancreas than in the heart, brain, liver and skeletal muscle.

It catalyses the reaction Strict requirement for an Asp residue at P1, with 316-Asp being essential for proteolytic activity and has a preferred cleavage sequence of Val-Asp-Val-Ala-Asp-|-.. In terms of biological role, is a regulator of the cascade of caspases responsible for apoptosis execution. Might function by either activating some proteins required for cell death or inactivating proteins necessary for cell survival. Associates with PIDD1 and CRADD to form the PIDDosome, a complex that activates CASP2 and triggers apoptosis in response to genotoxic stress. Acts as a positive regulator of apoptosis. Functionally, acts as a negative regulator of apoptosis. Its function is as follows. May function as an endogenous apoptosis inhibitor that antagonizes caspase activation and cell death. This Homo sapiens (Human) protein is Caspase-2 (CASP2).